The sequence spans 570 residues: Protein B602L (570 aa).

20 repeat units span residues 161-164 (CADT), 165-168 (NAST), 169-172 (SADT), 173-176 (NAST), 177-180 (CADT), 181-184 (NVDT), 185-188 (CAST), 189-192 (CADT), 193-196 (NVDT), 197-200 (CADT), 201-204 (CAST), 205-208 (CAST), 209-212 (CAST), 213-216 (CAST), 217-220 (CADT), 221-224 (NVDT), 225-228 (CADT), 229-232 (CVST), 233-236 (CAST), and 237-240 (CANT). Residues 161–240 (CADTNASTSA…STCASTCANT (80 aa)) form a 20 X 4 AA tandem repeats of [CNS]-[ATV]-[DNS]-T region.

This sequence belongs to the asfivirus B602L family.

It is found in the host cytoplasm. Its function is as follows. Plays an essential role in the assembly of the icosahedral capsid of the virus. Allows the assembly of 3 molecules of hexon protein p72 and formation of a thermostable trimer. The sequence is that of Protein B602L from African swine fever virus (isolate Tick/South Africa/Pretoriuskop Pr4/1996) (ASFV).